A 370-amino-acid chain; its full sequence is Endopolygalacturonase A (370 aa).

The first 19 residues, 1 to 19 (MPSAKPLFCLATLAGAALA), serve as a signal peptide directing secretion. Residues 20–32 (APAPSRATDFNKR) constitute a propeptide that is removed on maturation. Residues C35 and C50 are joined by a disulfide bond. PbH1 repeat units lie at residues 162–192 (SDNL…DISE), 193–214 (STYI…AINS), 215–235 (GENI…SIGS), 244–265 (VKNV…RIKT), 273–295 (VEDI…VIEQ), and 307–352 (SNGV…DITG). A disulfide bridge links C209 with C225. H229 is a catalytic residue. N246 carries N-linked (GlcNAc...) asparagine glycosylation. 2 disulfides stabilise this stretch: C335/C340 and C359/C368.

It belongs to the glycosyl hydrolase 28 family.

It localises to the secreted. The catalysed reaction is (1,4-alpha-D-galacturonosyl)n+m + H2O = (1,4-alpha-D-galacturonosyl)n + (1,4-alpha-D-galacturonosyl)m.. In terms of biological role, involved in maceration and soft-rotting of plant tissue. Hydrolyzes the 1,4-alpha glycosidic bonds of de-esterified pectate in the smooth region of the plant cell wall. The chain is Endopolygalacturonase A (pgaA) from Aspergillus awamori (Black koji mold).